A 224-amino-acid polypeptide reads, in one-letter code: Cytidylate kinase (224 aa).

An ATP-binding site is contributed by 11 to 19; it reads GPAAAGKST.

This sequence belongs to the cytidylate kinase family. Type 1 subfamily.

Its subcellular location is the cytoplasm. It carries out the reaction CMP + ATP = CDP + ADP. The enzyme catalyses dCMP + ATP = dCDP + ADP. This is Cytidylate kinase from Listeria welshimeri serovar 6b (strain ATCC 35897 / DSM 20650 / CCUG 15529 / CIP 8149 / NCTC 11857 / SLCC 5334 / V8).